A 1330-amino-acid chain; its full sequence is Protein PUTATIVE RECOMBINATION INITIATION DEFECT 1 (1330 aa).

Positions 1310 to 1330 (REGRVSPIQEETRQMQTERIV) are disordered.

As to quaternary structure, interacts with SPO11-1. According to PubMed:28855712, may interact with SPO11-2; this is in contradiction with PubMed:9461215 which claims that it seems to not interact with SPO11-2. Binds to DFO, PRD3 and MTOPVIB. Facilitates an interaction between PRD3 and DFO. Expressed in flower buds.

Its subcellular location is the nucleus. In terms of biological role, involved in DNA cleavage that forms the double-strand breaks (DSB) that initiate meiotic recombination. The protein is Protein PUTATIVE RECOMBINATION INITIATION DEFECT 1 of Arabidopsis thaliana (Mouse-ear cress).